We begin with the raw amino-acid sequence, 242 residues long: Argininosuccinate synthase (242 aa).

This sequence belongs to the argininosuccinate synthase family. Type 2 subfamily. Homotetramer.

Its subcellular location is the cytoplasm. The catalysed reaction is L-citrulline + L-aspartate + ATP = 2-(N(omega)-L-arginino)succinate + AMP + diphosphate + H(+). It functions in the pathway amino-acid biosynthesis; L-arginine biosynthesis; L-arginine from L-ornithine and carbamoyl phosphate: step 2/3. This Dickeya chrysanthemi (Pectobacterium chrysanthemi) protein is Argininosuccinate synthase (argG).